We begin with the raw amino-acid sequence, 288 residues long: Transposase InsF for insertion sequence IS3A (288 aa).

In terms of domain architecture, Integrase catalytic spans Tyr124–Leu287.

This sequence belongs to the transposase IS3/IS150/IS904 family.

Functionally, involved in the transposition of the insertion sequence IS3. The polypeptide is Transposase InsF for insertion sequence IS3A (insF1) (Escherichia coli (strain K12)).